The chain runs to 325 residues: NADH-quinone oxidoreductase subunit H (325 aa).

9 helical membrane passes run 11 to 31 (ILLT…CGAF), 50 to 69 (SRVG…KMFF), 81 to 101 (LIFT…FAIV), 114 to 134 (IGIL…LFAG), 154 to 174 (LSYE…AGSF), 186 to 206 (LWNI…GVAV), 237 to 257 (FFVG…TLFF), 265 to 285 (LPPF…FILV), and 304 to 324 (ICLP…LYHA).

The protein belongs to the complex I subunit 1 family. As to quaternary structure, NDH-1 is composed of 13 different subunits. Subunits NuoA, H, J, K, L, M, N constitute the membrane sector of the complex.

It is found in the cell inner membrane. It carries out the reaction a quinone + NADH + 5 H(+)(in) = a quinol + NAD(+) + 4 H(+)(out). Functionally, NDH-1 shuttles electrons from NADH, via FMN and iron-sulfur (Fe-S) centers, to quinones in the respiratory chain. The immediate electron acceptor for the enzyme in this species is believed to be ubiquinone. Couples the redox reaction to proton translocation (for every two electrons transferred, four hydrogen ions are translocated across the cytoplasmic membrane), and thus conserves the redox energy in a proton gradient. This subunit may bind ubiquinone. The polypeptide is NADH-quinone oxidoreductase subunit H (Edwardsiella ictaluri (strain 93-146)).